The primary structure comprises 115 residues: Histone H2A-Bbd type 2/3 (115 aa).

A disordered region spans residues 1–21 (MPRRRRRRGSSGAGGRGRTCS). Residues 87–115 (LLDMVVHNDRLLSTLFNTTTISQVAPGED) form a docking domain region.

Belongs to the histone H2A family. As to quaternary structure, the nucleosome is a histone octamer containing two molecules each of H2A, H2B, H3 and H4 assembled in one H3-H4 heterotetramer and two H2A-H2B heterodimers. May be incorporated into a proportion of nucleosomes, replacing one or more H2A molecules. As to expression, present in mature sperm.

It localises to the nucleus. It is found in the chromosome. Its function is as follows. Atypical histone H2A which can replace conventional H2A in some nucleosomes and is associated with active transcription and mRNA processing. Nucleosomes wrap and compact DNA into chromatin, limiting DNA accessibility to the cellular machineries which require DNA as a template. Histones thereby play a central role in transcription regulation, DNA repair, DNA replication and chromosomal stability. Nucleosomes containing this histone are less rigid and organize less DNA than canonical nucleosomes in vivo. They are enriched in actively transcribed genes and associate with the elongating form of RNA polymerase. They associate with spliceosome components and are required for mRNA splicing. May participate in spermatogenesis. The sequence is that of Histone H2A-Bbd type 2/3 from Homo sapiens (Human).